Reading from the N-terminus, the 366-residue chain is 3-dehydroquinate synthase (366 aa).

NAD(+) is bound by residues 107–111, 131–132, Lys-144, and Lys-153; these read GVIGD and TS. Zn(2+)-binding residues include Glu-186, His-251, and His-268.

It belongs to the sugar phosphate cyclases superfamily. Dehydroquinate synthase family. Requires Co(2+) as cofactor. Zn(2+) is required as a cofactor. The cofactor is NAD(+).

The protein resides in the cytoplasm. The catalysed reaction is 7-phospho-2-dehydro-3-deoxy-D-arabino-heptonate = 3-dehydroquinate + phosphate. The protein operates within metabolic intermediate biosynthesis; chorismate biosynthesis; chorismate from D-erythrose 4-phosphate and phosphoenolpyruvate: step 2/7. In terms of biological role, catalyzes the conversion of 3-deoxy-D-arabino-heptulosonate 7-phosphate (DAHP) to dehydroquinate (DHQ). The chain is 3-dehydroquinate synthase from Rippkaea orientalis (strain PCC 8801 / RF-1) (Cyanothece sp. (strain PCC 8801)).